The following is a 214-amino-acid chain: LINYKNMLHQHPLKLFNLLPVGSNISTWWNFGSMLLACLMIQTVTGFFLAIHYTANINLAFSSIIHITRDVPYGWIMQNTHAIGASMFFMCIYTHIARGLYYGSYLNKEVWLSGTTLLIVLMRTAFFGYVLPWGQMSFWAATVITNLLTAIPYLGNTLTTWLWGGFSINDPTLTRFFALHFILPFIIISLSSIHIILLHNEGSSNPLGTNSDID.

4 helical membrane-spanning segments follow: residues Phe-31–Ile-51, Trp-75–Ile-96, Trp-111–Leu-131, and Phe-176–Ile-196. Residues His-81 and His-95 each contribute to the heme b site. Positions 180 and 194 each coordinate heme b. An a ubiquinone-binding site is contributed by His-199.

The protein belongs to the cytochrome b family. In terms of assembly, the cytochrome bc1 complex contains 3 respiratory subunits (MT-CYB, CYC1 and UQCRFS1), 2 core proteins (UQCRC1 and UQCRC2) and probably 6 low-molecular weight proteins. Requires heme b as cofactor.

The protein resides in the mitochondrion inner membrane. Functionally, component of the ubiquinol-cytochrome c reductase complex (complex III or cytochrome b-c1 complex) that is part of the mitochondrial respiratory chain. The b-c1 complex mediates electron transfer from ubiquinol to cytochrome c. Contributes to the generation of a proton gradient across the mitochondrial membrane that is then used for ATP synthesis. The polypeptide is Cytochrome b (MT-CYB) (Cerastes cerastes (Horned desert viper)).